A 270-amino-acid polypeptide reads, in one-letter code: Endochitinase PR4 (270 aa).

A signal peptide spans 1–23 (MGNKLVLVLVAVALVMGPKNVSA). The region spanning 24-58 (QNCGCAEGLCCSQYGYCGTGEDYCGTGCQQGPCTT) is the Chitin-binding type-1 domain. 7 disulfide bridges follow: cysteine 26-cysteine 34, cysteine 28-cysteine 40, cysteine 33-cysteine 47, cysteine 51-cysteine 56, cysteine 88-cysteine 137, cysteine 150-cysteine 160, and cysteine 238-cysteine 270. Glutamate 132 acts as the Proton donor in catalysis.

Belongs to the glycosyl hydrolase 19 family. Chitinase class I subfamily.

The catalysed reaction is Random endo-hydrolysis of N-acetyl-beta-D-glucosaminide (1-&gt;4)-beta-linkages in chitin and chitodextrins.. In terms of biological role, defense against chitin-containing fungal pathogens. The chain is Endochitinase PR4 (CHI4) from Phaseolus vulgaris (Kidney bean).